Reading from the N-terminus, the 122-residue chain is Selenoprotein H (122 aa).

Lys20 carries the N6-acetyllysine modification. Residues 41–44 constitute a cross-link (cysteinyl-selenocysteine (Cys-Sec); redox-active); it reads CTSU. Position 44 (Sec44) is a non-standard amino acid, selenocysteine.

The protein belongs to the SelWTH family.

Functionally, may be involved in a redox-related process. The sequence is that of Selenoprotein H from Macaca fascicularis (Crab-eating macaque).